A 76-amino-acid chain; its full sequence is Acyl carrier protein (76 aa).

Residues 1–76 (MSIEERVKKI…SAIDYVQNNQ (76 aa)) form the Carrier domain. Residue Ser36 is modified to O-(pantetheine 4'-phosphoryl)serine.

It belongs to the acyl carrier protein (ACP) family. In terms of processing, 4'-phosphopantetheine is transferred from CoA to a specific serine of apo-ACP by AcpS. This modification is essential for activity because fatty acids are bound in thioester linkage to the sulfhydryl of the prosthetic group.

It is found in the cytoplasm. It participates in lipid metabolism; fatty acid biosynthesis. Its function is as follows. Carrier of the growing fatty acid chain in fatty acid biosynthesis. The protein is Acyl carrier protein of Mannheimia succiniciproducens (strain KCTC 0769BP / MBEL55E).